The primary structure comprises 338 residues: Ketol-acid reductoisomerase (NADP(+)) (338 aa).

The KARI N-terminal Rossmann domain occupies 1 to 181 (MKVFYDKDAD…GGGRAGIIET (181 aa)). NADP(+) is bound by residues 24-27 (YGSQ), Arg-47, and Ser-52. Residue His-107 is part of the active site. Position 133 (Gly-133) interacts with NADP(+). In terms of domain architecture, KARI C-terminal knotted spans 182-327 (NFREETETDL…SKLRAMMPWI (146 aa)). Mg(2+) is bound by residues Asp-190, Glu-194, Glu-226, and Glu-230. Residue Ser-251 coordinates substrate.

Belongs to the ketol-acid reductoisomerase family. The cofactor is Mg(2+).

The enzyme catalyses (2R)-2,3-dihydroxy-3-methylbutanoate + NADP(+) = (2S)-2-acetolactate + NADPH + H(+). It catalyses the reaction (2R,3R)-2,3-dihydroxy-3-methylpentanoate + NADP(+) = (S)-2-ethyl-2-hydroxy-3-oxobutanoate + NADPH + H(+). It functions in the pathway amino-acid biosynthesis; L-isoleucine biosynthesis; L-isoleucine from 2-oxobutanoate: step 2/4. The protein operates within amino-acid biosynthesis; L-valine biosynthesis; L-valine from pyruvate: step 2/4. Its function is as follows. Involved in the biosynthesis of branched-chain amino acids (BCAA). Catalyzes an alkyl-migration followed by a ketol-acid reduction of (S)-2-acetolactate (S2AL) to yield (R)-2,3-dihydroxy-isovalerate. In the isomerase reaction, S2AL is rearranged via a Mg-dependent methyl migration to produce 3-hydroxy-3-methyl-2-ketobutyrate (HMKB). In the reductase reaction, this 2-ketoacid undergoes a metal-dependent reduction by NADPH to yield (R)-2,3-dihydroxy-isovalerate. The protein is Ketol-acid reductoisomerase (NADP(+)) of Paraburkholderia xenovorans (strain LB400).